Reading from the N-terminus, the 214-residue chain is Probable transaldolase (214 aa).

K83 acts as the Schiff-base intermediate with substrate in catalysis.

This sequence belongs to the transaldolase family. Type 3B subfamily.

The protein resides in the cytoplasm. It carries out the reaction D-sedoheptulose 7-phosphate + D-glyceraldehyde 3-phosphate = D-erythrose 4-phosphate + beta-D-fructose 6-phosphate. The protein operates within carbohydrate degradation; pentose phosphate pathway; D-glyceraldehyde 3-phosphate and beta-D-fructose 6-phosphate from D-ribose 5-phosphate and D-xylulose 5-phosphate (non-oxidative stage): step 2/3. Functionally, transaldolase is important for the balance of metabolites in the pentose-phosphate pathway. This chain is Probable transaldolase, found in Streptococcus equi subsp. zooepidemicus (strain MGCS10565).